Here is a 172-residue protein sequence, read N- to C-terminus: C-phycocyanin beta chain (172 aa).

(2R,3E)-phycocyanobilin-binding positions include Asn-35, Asp-39, Asn-72, Arg-77, Cys-82, 82–88 (CLRDMEI), 149–151 (TTG), and Cys-153. Position 72 is an N4-methylasparagine (Asn-72).

This sequence belongs to the phycobiliprotein family. In terms of assembly, heterodimer of an alpha and a beta subunit. Dimers further assemble into trimers and the trimers into hexamers. The basic functional unit of phycobiliproteins is a ring-shaped hexamer formed from two back-to-back trimers contacting via the alpha chain subunits. The trimers are composed of alpha/beta subunit heterodimers arranged around a three-fold axis of symmetry. The phycoerythrins also contain a gamma subunit which is located in the center of the hexamer. Post-translationally, contains two covalently linked phycocyanobilin chromophores.

It localises to the plastid. The protein resides in the chloroplast thylakoid membrane. Its function is as follows. Light-harvesting photosynthetic tetrapyrrole chromophore-protein from the phycobiliprotein complex (phycobilisome, PBS). Phycocyanin is the major phycobiliprotein in the PBS rod. This is C-phycocyanin beta chain (cpcB) from Galdieria sulphuraria (Red alga).